The sequence spans 269 residues: Indole-3-glycerol phosphate synthase (269 aa).

It belongs to the TrpC family.

The catalysed reaction is 1-(2-carboxyphenylamino)-1-deoxy-D-ribulose 5-phosphate + H(+) = (1S,2R)-1-C-(indol-3-yl)glycerol 3-phosphate + CO2 + H2O. Its pathway is amino-acid biosynthesis; L-tryptophan biosynthesis; L-tryptophan from chorismate: step 4/5. This chain is Indole-3-glycerol phosphate synthase, found in Roseiflexus sp. (strain RS-1).